We begin with the raw amino-acid sequence, 211 residues long: Holliday junction branch migration complex subunit RuvA (211 aa).

A domain I region spans residues 1–70; it reads MIQFLQGQVV…QDQIALFGFG (70 aa). The interval 71 to 149 is domain II; it reads RLAERDLFGQ…QWHKLQMGTG (79 aa). The flexible linker stretch occupies residues 150–158; that stretch reads ETDSTLPTT. The interval 158–211 is domain III; it reads TALLEDLEMTLLALGYTQTEIQQAIAMVSQVPDVAQSEDPEVWIRQAIGWLSDH.

The protein belongs to the RuvA family. Homotetramer. Forms an RuvA(8)-RuvB(12)-Holliday junction (HJ) complex. HJ DNA is sandwiched between 2 RuvA tetramers; dsDNA enters through RuvA and exits via RuvB. An RuvB hexamer assembles on each DNA strand where it exits the tetramer. Each RuvB hexamer is contacted by two RuvA subunits (via domain III) on 2 adjacent RuvB subunits; this complex drives branch migration. In the full resolvosome a probable DNA-RuvA(4)-RuvB(12)-RuvC(2) complex forms which resolves the HJ.

It is found in the cytoplasm. Its function is as follows. The RuvA-RuvB-RuvC complex processes Holliday junction (HJ) DNA during genetic recombination and DNA repair, while the RuvA-RuvB complex plays an important role in the rescue of blocked DNA replication forks via replication fork reversal (RFR). RuvA specifically binds to HJ cruciform DNA, conferring on it an open structure. The RuvB hexamer acts as an ATP-dependent pump, pulling dsDNA into and through the RuvAB complex. HJ branch migration allows RuvC to scan DNA until it finds its consensus sequence, where it cleaves and resolves the cruciform DNA. The polypeptide is Holliday junction branch migration complex subunit RuvA (Synechocystis sp. (strain ATCC 27184 / PCC 6803 / Kazusa)).